The primary structure comprises 407 residues: MDIILGVVMFTLIVLALVLVILFAKSKLVPTGDITISVNGDADKAIVTQPGGKLLSALAGAGVFVSSACGGGGSCGQCRVKVKSGGGDILPTELDHITKGEAREGERLACQVAVKTDMDIELPEEIFGVKKWECTVISNDNKATFIKELKLQIPDGESVPFRAGGYIQIEAPAHHVKYADYDIPQEYREDWEKFNLFRYESKVNEETIRAYSMANYPEEHGIIMLNVRIATPPPNNPDVPPGIMSSYIWSLKEGDKCTISGPFGEFFAKDTDAEMVFIGGGAGMAPMRSHIFDQLKRLHSKRKMSFWYGARSKREMFYVEDFDGLAAENDNFVWHCALSDPLPEDNWDGYTGFIHNVLYENYLRDHEAPEDCEYYMCGPPMMNAAVIGMLKDLGVEDENILLDDFGG.

The helical transmembrane segment at 3 to 23 (IILGVVMFTLIVLALVLVILF) threads the bilayer. The region spanning 32-126 (GDITISVNGD…DMDIELPEEI (95 aa)) is the 2Fe-2S ferredoxin-type domain. [2Fe-2S] cluster-binding residues include C69, C75, C78, and C110. The region spanning 129–269 (VKKWECTVIS…SGPFGEFFAK (141 aa)) is the FAD-binding FR-type domain. The segment at 272 to 389 (DAEMVFIGGG…PMMNAAVIGM (118 aa)) is catalytic.

It belongs to the NqrF family. In terms of assembly, composed of six subunits; NqrA, NqrB, NqrC, NqrD, NqrE and NqrF. The cofactor is [2Fe-2S] cluster. FAD serves as cofactor.

The protein resides in the cell inner membrane. The catalysed reaction is a ubiquinone + n Na(+)(in) + NADH + H(+) = a ubiquinol + n Na(+)(out) + NAD(+). Its function is as follows. NQR complex catalyzes the reduction of ubiquinone-1 to ubiquinol by two successive reactions, coupled with the transport of Na(+) ions from the cytoplasm to the periplasm. The first step is catalyzed by NqrF, which accepts electrons from NADH and reduces ubiquinone-1 to ubisemiquinone by a one-electron transfer pathway. The sequence is that of Na(+)-translocating NADH-quinone reductase subunit F from Vibrio parahaemolyticus serotype O3:K6 (strain RIMD 2210633).